The sequence spans 173 residues: Protein SUGARY ENHANCER 1 (173 aa).

The disordered stretch occupies residues 1-31 (MIRPAPWVGAGHRGRGGEAGACTESLGSESG).

Belongs to the fantastic four family.

Functionally, involved in starch metabolism in endosperm. Acts as a modifier of SUGARY1 (SU1), an isoamylase starch-debranching enzyme involved in amylopectin biosynthesis in endosperm. This is Protein SUGARY ENHANCER 1 from Zea mays (Maize).